The primary structure comprises 174 residues: Large ribosomal subunit protein uL10 (174 aa).

It belongs to the universal ribosomal protein uL10 family. As to quaternary structure, part of the ribosomal stalk of the 50S ribosomal subunit. The N-terminus interacts with L11 and the large rRNA to form the base of the stalk. The C-terminus forms an elongated spine to which L12 dimers bind in a sequential fashion forming a multimeric L10(L12)X complex.

Functionally, forms part of the ribosomal stalk, playing a central role in the interaction of the ribosome with GTP-bound translation factors. This chain is Large ribosomal subunit protein uL10, found in Bordetella petrii (strain ATCC BAA-461 / DSM 12804 / CCUG 43448).